Here is a 246-residue protein sequence, read N- to C-terminus: Octanoyltransferase (246 aa).

The region spanning 54–240 (DPPPEAVWLL…CLEPNADAAI (187 aa)) is the BPL/LPL catalytic domain. Substrate-binding positions include 96 to 103 (RGGEVTHH), 163 to 165 (AIG), and 176 to 178 (GVA). Cys194 serves as the catalytic Acyl-thioester intermediate.

Belongs to the LipB family.

It is found in the cytoplasm. It carries out the reaction octanoyl-[ACP] + L-lysyl-[protein] = N(6)-octanoyl-L-lysyl-[protein] + holo-[ACP] + H(+). It functions in the pathway protein modification; protein lipoylation via endogenous pathway; protein N(6)-(lipoyl)lysine from octanoyl-[acyl-carrier-protein]: step 1/2. Functionally, catalyzes the transfer of endogenously produced octanoic acid from octanoyl-acyl-carrier-protein onto the lipoyl domains of lipoate-dependent enzymes. Lipoyl-ACP can also act as a substrate although octanoyl-ACP is likely to be the physiological substrate. The chain is Octanoyltransferase from Synechococcus sp. (strain WH7803).